We begin with the raw amino-acid sequence, 480 residues long: Ribulose bisphosphate carboxylase large chain (480 aa).

Residues 1-2 (MS) constitute a propeptide that is removed on maturation. Proline 3 is subject to N-acetylproline. N6,N6,N6-trimethyllysine is present on lysine 14. Substrate-binding residues include asparagine 123 and threonine 173. Lysine 175 (proton acceptor) is an active-site residue. Residue lysine 177 participates in substrate binding. Residues lysine 201, aspartate 203, and glutamate 204 each coordinate Mg(2+). At lysine 201 the chain carries N6-carboxylysine. The active-site Proton acceptor is histidine 294. Substrate contacts are provided by arginine 295, histidine 327, and serine 379.

This sequence belongs to the RuBisCO large chain family. Type I subfamily. In terms of assembly, heterohexadecamer of 8 large chains and 8 small chains; disulfide-linked. The disulfide link is formed within the large subunit homodimers. Mg(2+) is required as a cofactor. The disulfide bond which can form in the large chain dimeric partners within the hexadecamer appears to be associated with oxidative stress and protein turnover.

Its subcellular location is the plastid. It localises to the chloroplast. It catalyses the reaction 2 (2R)-3-phosphoglycerate + 2 H(+) = D-ribulose 1,5-bisphosphate + CO2 + H2O. The catalysed reaction is D-ribulose 1,5-bisphosphate + O2 = 2-phosphoglycolate + (2R)-3-phosphoglycerate + 2 H(+). In terms of biological role, ruBisCO catalyzes two reactions: the carboxylation of D-ribulose 1,5-bisphosphate, the primary event in carbon dioxide fixation, as well as the oxidative fragmentation of the pentose substrate in the photorespiration process. Both reactions occur simultaneously and in competition at the same active site. The chain is Ribulose bisphosphate carboxylase large chain from Rivina humilis (Rougeplant).